Consider the following 145-residue polypeptide: Transcription elongation factor 1 (145 aa).

Residues Cys-25, Cys-28, Cys-49, and Cys-52 each contribute to the Zn(2+) site. Ser-55 is subject to Phosphoserine. Positions 80–145 (VNSGRGSDTD…RGALVDSDDE (66 aa)) are disordered. 2 stretches are compositionally biased toward acidic residues: residues 88–104 (TDDG…SDSE) and 113–126 (GEID…DSDE). 3 positions are modified to phosphoserine: Ser-117, Ser-124, and Ser-142.

Belongs to the ELOF1 family.

The protein resides in the nucleus. Its function is as follows. Transcription elongation factor implicated in the maintenance of proper chromatin structure in actively transcribed regions. In Saccharomyces cerevisiae (strain ATCC 204508 / S288c) (Baker's yeast), this protein is Transcription elongation factor 1 (ELF1).